Here is a 436-residue protein sequence, read N- to C-terminus: GTPase Der (436 aa).

2 EngA-type G domains span residues 4 to 167 and 176 to 351; these read PIVA…DEET and IRLS…ENHK. GTP is bound by residues 10–17, 57–61, 119–122, 182–189, 229–233, and 294–297; these read GRPNVGKS, DTGGI, NKVD, DTAGM, and NKWD. The KH-like domain maps to 352-436; the sequence is KRVQSSTLNE…PIHIIPRRRN (85 aa).

The protein belongs to the TRAFAC class TrmE-Era-EngA-EngB-Septin-like GTPase superfamily. EngA (Der) GTPase family. Associates with the 50S ribosomal subunit.

In terms of biological role, GTPase that plays an essential role in the late steps of ribosome biogenesis. The protein is GTPase Der of Staphylococcus haemolyticus (strain JCSC1435).